Reading from the N-terminus, the 2054-residue chain is MLETIDKNRALQAAERLQSKLKERGDVANEDKLSLLKSVLQSPLFSQILSLQTSLQQLKDQVNVATLATANADHAHTPQFSSAIISNLQSESLLLSPSNGNLEAISGPGAPPAMDGKPACEELDQLIKSMAQGRHVEIFELLKPPCGGLGFSVVGLRSENRGELGIFVQEIQEGSVAHRDGRLKETDQILAINGQVLDQTITHQQAISILQKAKDTIQLVIARGSLPHISSPRISRSPSAASTVSAHSNPTHWQHVETIELVNDGSGLGFGIIGGKATGVIVKTILPGGVADQHGRLCSGDHILKIGDTDLAGMSSEQVAQVLRQCGNRVKLMIARGAVEETPAPSSLGITLSSSTSTSEMRVDASTQKNEESETFDVELTKNVQGLGITIAGYIGDKKLEPSGIFVKSITKSSAVELDGRIQIGDQIVAVDGTNLQGFTNQQAVEVLRHTGQTVRLTLMRKGASQEAEITSREDTAKDVDLPAENYEKDEESLSLKRSTSILPIEEEGYPLLSTELEETEDVQQEAALLTKWQRIMGINYEIVVAHVSKFSENSGLGISLEATVGHHFIRSVLPEGPVGHSGKLFSGDELLEVNGINLLGENHQDVVNILKELPIDVTMVCCRRTVPPTALSEVDSLDIHDLELTEKPHIDLGEFIGSSETEDPMLAMSDVDQNAEEIQTPLAMWEAGIQAIELEKGSRGLGFSILDYQDPIDPANTVIVIRSLVPGGIAEKDGRLFPGDRLMFVNDINLENSTLEEAVEALKGAPSGMVRIGVAKPLPLSPEEGYVSAKEDTFLCSPHTCKEMGLSDKALFRADLALIDTPDAESVAESRFESQFSPDNDSVYSTQASVLSLHDGACSDGMNYGPSLPSSPPKDVTNSSDLVLGLHLSLEELYTQNLLQRQHAGSPPTDMSPAATSGFTVSDYTPANAVEQKYECANTVAWTPSQLPSGLSTTELAPALPAVAPKYLTEQSSLVSDAESVTLQSMSQEAFERTVTIAKGSSSLGMTVSANKDGLGVIVRSIIHGGAISRDGRIAVGDCILSINEESTISLTNAQARAMLRRHSLIGPDIKITYVPAEHLEEFRVSFGQQAGGIMALDIFSSYTGRDIPELPEREEGEGEESELQNAAYSSWSQPRRVELWREPSKSLGISIVGGRGMGSRLSNGEVMRGIFIKHVLEDSPAGKNGTLKPGDRIVEVDGMDLRDASHEQAVEAIRKAGSPVVFMVQSIVNRPRKSPLPSLPHSLYPKCSFSSTNPFAESLQLTSDKAPSQSESESEKATLCSVPSSSPSVFSEMSSDYAQPSATTVAEDEDKEDEFGYSWKNIQERYGTLTGQLHMIELEKGHSGLGLSLAGNKDRTRMSVFIVGIDPTGAAGRDGRLQIADELLEINGQILYGRSHQNASSIIKCAPSKVKIIFIRNADAVNQMAVCPGSAADPLPSTSESPQNKEVEPSITTSASAVDLSSLTNVYHLELPKDQGGLGIAICEEDTLNGVTIKSLTERGGAAKDGRLKPGDRILAVDDELVAGCPIEKFISLLKTAKTTVKLTVGAENPGCQAVPSAAVTASGERKDSSQTPAVPAPDLEPIPSTSRSSTPAIFASDPATCPIIPGCETTIEISKGQTGLGLSIVGGSDTLLGAIIIHEVYEEGAACKDGRLWAGDQILEVNGIDLRKATHDEAINVLRQTPQRVRLTLYRDEAPYKEEDVCDTFTVELQKRPGKGLGLSIVGKRNDTGVFVSDIVKGGIADADGRLMQGDQILMVNGEDVRNATQEAVAALLKCSLGTVTLEVGRIKAAPFHSERRPSQSSQVSESSLSSFSLPRSGIHTSESSESSAKKNALASEIQGLRTVEIKKGPADALGLSIAGGVGSPLGDVPIFIAMMHPNGVAAQTQKLRVGDRIVTICGTSTDGMTHTQAVNLMKNASGSIEVQVVAGGDVSVVTGHQQELANPCLAFTGLTSSTIFPDDLGPPQSKTITLDRGPDGLGFSIVGGYGSPHGDLPIYVKTVFAKGAAAEDGRLKRGDQIIAVNGQSLEGVTHEEAVAILKRTKGTVTLMVLS.

Residues 3 to 63 (ETIDKNRALQ…SLQQLKDQVN (61 aa)) form the L27 domain. The PDZ 1 domain maps to 138–225 (IFELLKPPCG…TIQLVIARGS (88 aa)). Ser-231 is subject to Phosphoserine. PDZ domains follow at residues 258 to 338 (TIEL…ARGA), 377 to 463 (DVEL…MRKG), 545 to 626 (VAHV…CRRT), and 692 to 778 (AIEL…VAKP). Phosphoserine is present on residues Ser-782 and Ser-1065. Positions 995-1076 (TVTIAKGSSS…IGPDIKITYV (82 aa)) constitute a PDZ 6 domain. A disordered region spans residues 1110–1129 (PELPEREEGEGEESELQNAA). A PDZ 7 domain is found at 1138-1230 (RVELWREPSK…PVVFMVQSIV (93 aa)). Residue Arg-1157 is modified to Omega-N-methylarginine. Over residues 1261–1273 (LQLTSDKAPSQSE) the composition is skewed to polar residues. Residues 1261–1312 (LQLTSDKAPSQSESESEKATLCSVPSSSPSVFSEMSSDYAQPSATTVAEDED) form a disordered region. Positions 1283-1297 (SVPSSSPSVFSEMSS) are enriched in low complexity. Positions 1337-1420 (MIELEKGHSG…KVKIIFIRNA (84 aa)) constitute a PDZ 8 domain. The tract at residues 1433 to 1454 (AADPLPSTSESPQNKEVEPSIT) is disordered. The PDZ 9 domain occupies 1470-1551 (HLELPKDQGG…TVKLTVGAEN (82 aa)). The interval 1560 to 1594 (AAVTASGERKDSSQTPAVPAPDLEPIPSTSRSSTP) is disordered. PDZ domains lie at 1613–1696 (TIEI…YRDE) and 1709–1791 (TVEL…GRIK). The tract at residues 1795–1834 (FHSERRPSQSSQVSESSLSSFSLPRSGIHTSESSESSAKK) is disordered. Phosphoserine is present on residues Ser-1802 and Ser-1808. Low complexity predominate over residues 1802–1834 (SQSSQVSESSLSSFSLPRSGIHTSESSESSAKK). 2 PDZ domains span residues 1846–1932 (TVEI…VAGG) and 1971–2054 (TITL…MVLS).

As to quaternary structure, interacts with F11R/JAM, CLDN1, NG2, CXADR, CRB1, MPP4 and PALS1, HTR2A, HTR2B, PLEKHA1/TAPP1 and PLEKHA2/TAPP2. Interacts with CXADR. Interacts with HTR2C, CLDN5, DLG4, GRIN1, SYNGAP1, CAMK2A and CAMK2B. Interacts with FAT4 (via cytoplasmic domain). Interacts with DLL1. Abundant in all cerebral cortical layers, especially the piriform cortex, the pyramidal cells of the CA1-CA3 subfields of the hippocampus, as well as the granular layer of the dentate gyrus. Detected in the internal granular layer and the mitral cell layer of the olfactory bulb; in the medial habenular nucleus; and in amygdaloid, thalamic, hypothalamic, and pontine nuclei. In the cerebellum, found at high levels in the granular layer. Detected in the lateral ventricle. Expression overlaps with 5-HT2C receptor expression in all regions of the brain including the choroid plexus, where 5-HT2C receptors are highly enriched.

It localises to the endomembrane system. The protein localises to the cell junction. Its subcellular location is the tight junction. It is found in the synapse. The protein resides in the apical cell membrane. It localises to the postsynaptic density. The protein localises to the cell projection. Its subcellular location is the dendrite. It is found in the synaptosome. Functionally, member of the NMDAR signaling complex that may play a role in control of AMPAR potentiation and synaptic plasticity in excitatory synapses. Promotes clustering of HT2RC at the cell surface. In Rattus norvegicus (Rat), this protein is Multiple PDZ domain protein (Mpdz).